A 29-amino-acid polypeptide reads, in one-letter code: Glucagon (29 aa).

The protein belongs to the glucagon family.

It localises to the secreted. Its function is as follows. Glucagon plays a key role in glucose metabolism and homeostasis. Regulates blood glucose by increasing gluconeogenesis and decreasing glycolysis. The protein is Glucagon (gcg) of Callorhinchus milii (Ghost shark).